The following is a 253-amino-acid chain: MADAPYKLILLRHGESEWNAKNLFTGWVDVNLNEKGEKEAVRGGELLKDAGLLPDVVHTSLQKRAIRTAQLALESADRHWIPVHRSWRLNERHYGALQGKDKAQTLAEFGEEQFMLWRRSYDTPPPPLADGSEFSQSDDPRYASIPPELRPKTECLKDVVNRMLPYWYDGIVPDLLTGRTVLVAAHGNSLRALVKHLDGISDEDIAGLNIPTGIPLSYELDTDFKPLNPGGTYLDPDAAAAAIEAVKNQGKKK.

Residues 12-19, 25-26, R64, 91-94, K102, and 118-119 each bind substrate; these read RHGESEWN, TG, ERHY, and RR. The Tele-phosphohistidine intermediate role is filled by H13. The active-site Proton donor/acceptor is the E91. The interval 126 to 148 is disordered; the sequence is PPLADGSEFSQSDDPRYASIPPE. Residue 187–188 participates in substrate binding; it reads GN.

Belongs to the phosphoglycerate mutase family. BPG-dependent PGAM subfamily.

It carries out the reaction (2R)-2-phosphoglycerate = (2R)-3-phosphoglycerate. Its pathway is carbohydrate degradation; glycolysis; pyruvate from D-glyceraldehyde 3-phosphate: step 3/5. Functionally, catalyzes the interconversion of 2-phosphoglycerate and 3-phosphoglycerate. The protein is 2,3-bisphosphoglycerate-dependent phosphoglycerate mutase of Streptomyces avermitilis (strain ATCC 31267 / DSM 46492 / JCM 5070 / NBRC 14893 / NCIMB 12804 / NRRL 8165 / MA-4680).